The primary structure comprises 64 residues: Prokaryotic ubiquitin-like protein Pup (64 aa).

The tract at residues 1 to 35 (MAQGGQVSAGGGRRDDDEPIEQTSGAGTQQVNVTG) is disordered. A compositionally biased stretch (polar residues) spans 21-33 (EQTSGAGTQQVNV). Positions 21 to 58 (EQTSGAGTQQVNVTGTDDLLDEIDGLLENNAEEFVRSY) are ARC ATPase binding. Deamidated glutamine is present on Gln-64. Residue Gln-64 forms an Isoglutamyl lysine isopeptide (Gln-Lys) (interchain with K-? in acceptor proteins) linkage.

This sequence belongs to the prokaryotic ubiquitin-like protein family. Strongly interacts with the proteasome-associated ATPase ARC through a hydrophobic interface; the interacting region of Pup lies in its C-terminal half. There is one Pup binding site per ARC hexamer ring. Is modified by deamidation of its C-terminal glutamine to glutamate by the deamidase Dop, a prerequisite to the subsequent pupylation process.

Its pathway is protein degradation; proteasomal Pup-dependent pathway. In terms of biological role, protein modifier that is covalently attached to lysine residues of substrate proteins, thereby targeting them for proteasomal degradation. The tagging system is termed pupylation. This is Prokaryotic ubiquitin-like protein Pup from Corynebacterium jeikeium (strain K411).